A 217-amino-acid polypeptide reads, in one-letter code: Adenylate kinase (217 aa).

10 to 15 contributes to the ATP binding site; that stretch reads GIGKGT. An NMP region spans residues 30–59; the sequence is ATGDIFRKNFQENTPLGKESKKFINKGLLV. AMP-binding positions include threonine 31, arginine 36, 57–59, 85–88, and glutamine 92; these read LLV and GFPR. The tract at residues 126 to 163 is LID; that stretch reads GRRICSHCGKVYHLDNLPPKIEGICDKDQKKLIQREDD. Arginine 127 lines the ATP pocket. Residues cysteine 130 and cysteine 133 each contribute to the Zn(2+) site. Residue 136–137 coordinates ATP; the sequence is VY. Zn(2+)-binding residues include cysteine 150 and aspartate 153. Residues arginine 160 and arginine 171 each contribute to the AMP site. Glutamine 199 is a binding site for ATP.

Belongs to the adenylate kinase family. As to quaternary structure, monomer.

Its subcellular location is the cytoplasm. It catalyses the reaction AMP + ATP = 2 ADP. The protein operates within purine metabolism; AMP biosynthesis via salvage pathway; AMP from ADP: step 1/1. In terms of biological role, catalyzes the reversible transfer of the terminal phosphate group between ATP and AMP. Plays an important role in cellular energy homeostasis and in adenine nucleotide metabolism. The polypeptide is Adenylate kinase (Phytoplasma australiense).